Here is a 302-residue protein sequence, read N- to C-terminus: Quinolinate synthase (302 aa).

The iminosuccinate site is built by H24 and S41. C86 contacts [4Fe-4S] cluster. Iminosuccinate is bound by residues 112 to 114 (YVN) and S129. A [4Fe-4S] cluster-binding site is contributed by C173. Residues 199 to 201 (HPE) and T216 contribute to the iminosuccinate site. C259 contributes to the [4Fe-4S] cluster binding site.

The protein belongs to the quinolinate synthase family. Type 2 subfamily. Requires [4Fe-4S] cluster as cofactor.

The protein resides in the cytoplasm. It catalyses the reaction iminosuccinate + dihydroxyacetone phosphate = quinolinate + phosphate + 2 H2O + H(+). It participates in cofactor biosynthesis; NAD(+) biosynthesis; quinolinate from iminoaspartate: step 1/1. Catalyzes the condensation of iminoaspartate with dihydroxyacetone phosphate to form quinolinate. The sequence is that of Quinolinate synthase from Thermococcus kodakarensis (strain ATCC BAA-918 / JCM 12380 / KOD1) (Pyrococcus kodakaraensis (strain KOD1)).